Reading from the N-terminus, the 731-residue chain is Anaphase-promoting complex subunit 2 (731 aa).

It belongs to the cullin family. As to quaternary structure, the APC/C is probably composed of at least 12 subunits: apc-2, apc-10, apc-11, cdc-26, emb-1, emb-27, emb-30, mat-1, mat-2, mat-3, such-1 and gfi-3.

It functions in the pathway protein modification; protein ubiquitination. In terms of biological role, probable component of the anaphase promoting complex/cyclosome (APC/C), a cell cycle-regulated ubiquitin ligase that controls progression through mitosis and the G1 phase of the cell cycle. The APC/C complex acts by mediating ubiquitination and subsequent degradation of target proteins. Developmental role in early embryogenesis and the metaphase to anaphase transition in meiosis and mitosis. The chain is Anaphase-promoting complex subunit 2 from Caenorhabditis elegans.